A 226-amino-acid polypeptide reads, in one-letter code: Transcriptional regulatory protein CitT (226 aa).

One can recognise a Response regulatory domain in the interval 3 to 119 (HIAIAEDDFR…KFRQVLLQYK (117 aa)). D54 is subject to 4-aspartylphosphate. The H-T-H motif DNA-binding region spans 178–197 (AEELGEKMGASRTTARRYAE).

In terms of processing, phosphorylated by CitS.

The protein resides in the cytoplasm. Functionally, member of the two-component regulatory system CitT/CitS. Regulates the expression of the citM-yflN operon. Phosphorylated CitT binds to the citM promoter to activate the transcription of the citM-yflN operon. The sequence is that of Transcriptional regulatory protein CitT (citT) from Bacillus subtilis (strain 168).